The primary structure comprises 213 residues: CDP-diacylglycerol--inositol 3-phosphatidyltransferase (213 aa).

Residues M1–N5 are Cytoplasmic-facing. The helical transmembrane segment at I6–F26 threads the bilayer. Position 27 (Y27) is a topological domain, lumenal. Residues F28–A48 traverse the membrane as a helical segment. D47 and D50 together coordinate Mg(2+). Over F49–R73 the chain is Cytoplasmic. G51, R55, and T61 together coordinate a CDP-1,2-diacyl-sn-glycerol. Mg(2+) contacts are provided by D68 and D72. D72 serves as the catalytic Proton acceptor. Residues C74 to F94 traverse the membrane as a helical segment. Residue Q95 is a topological domain, lumenal. The chain crosses the membrane as a helical span at residues L96–G116. The Cytoplasmic portion of the chain corresponds to S117–P139. Residues A140–F160 traverse the membrane as a helical segment. Topologically, residues S161–M174 are lumenal. A helical transmembrane segment spans residues G175–V195. Residues T196–K213 are Cytoplasmic-facing.

The protein belongs to the CDP-alcohol phosphatidyltransferase class-I family. Requires Mn(2+) as cofactor. It depends on Mg(2+) as a cofactor. Detected in liver (at protein level). Widely expressed. Highly expressed in the brain and kidney; lower levels in heart, spleen, lung, liver, skeletal muscle and testis.

It localises to the endoplasmic reticulum membrane. The protein localises to the cell membrane. The catalysed reaction is a CDP-1,2-diacyl-sn-glycerol + myo-inositol = a 1,2-diacyl-sn-glycero-3-phospho-(1D-myo-inositol) + CMP + H(+). Its function is as follows. Catalyzes the biosynthesis of phosphatidylinositol (PtdIns) as well as PtdIns:inositol exchange reaction. May thus act to reduce an excessive cellular PtdIns content. The exchange activity is due to the reverse reaction of PtdIns synthase and is dependent on CMP, which is tightly bound to the enzyme. This is CDP-diacylglycerol--inositol 3-phosphatidyltransferase from Rattus norvegicus (Rat).